The chain runs to 59 residues: Large ribosomal subunit protein uL30 (59 aa).

This sequence belongs to the universal ribosomal protein uL30 family. In terms of assembly, part of the 50S ribosomal subunit.

The polypeptide is Large ribosomal subunit protein uL30 (Streptococcus agalactiae serotype Ia (strain ATCC 27591 / A909 / CDC SS700)).